Here is a 104-residue protein sequence, read N- to C-terminus: Probable guanidinium efflux system subunit GdnD (104 aa).

4 consecutive transmembrane segments (helical) span residues 3–23, 31–51, 58–78, and 84–104; these read WICLIAAGILEMLGVTMMNQF, WIFLLIIGFAASFFLLSLAME, AYAVWTGIGTVGGALVGILFY, and GKRIFFIALILGSAVGLKLIS.

It belongs to the drug/metabolite transporter (DMT) superfamily. Small multidrug resistance (SMR) (TC 2.A.7.1) family. YkkC/YkkD subfamily. As to quaternary structure, the efflux pump is composed of GdnC and GdnD.

It localises to the cell membrane. Functionally, probably involved in guanidinium transport. The sequence is that of Probable guanidinium efflux system subunit GdnD from Bacillus licheniformis (strain ATCC 14580 / DSM 13 / JCM 2505 / CCUG 7422 / NBRC 12200 / NCIMB 9375 / NCTC 10341 / NRRL NRS-1264 / Gibson 46).